The chain runs to 396 residues: Stearoyl-[acyl-carrier-protein] 9-desaturase, chloroplastic (396 aa).

The N-terminal 33 residues, methionine 1–methionine 33, are a transit peptide targeting the chloroplast. Fe cation contacts are provided by glutamate 138, glutamate 176, histidine 179, glutamate 229, glutamate 262, and histidine 265.

The protein belongs to the fatty acid desaturase type 2 family. As to quaternary structure, homodimer. Fe(2+) is required as a cofactor. Higher levels in developing seeds than in leaf and root tissues.

It is found in the plastid. The protein resides in the chloroplast. It catalyses the reaction octadecanoyl-[ACP] + 2 reduced [2Fe-2S]-[ferredoxin] + O2 + 2 H(+) = (9Z)-octadecenoyl-[ACP] + 2 oxidized [2Fe-2S]-[ferredoxin] + 2 H2O. The protein operates within lipid metabolism; fatty acid metabolism. Converts stearoyl-ACP to oleoyl-ACP by introduction of a cis double bond between carbons 9 and 10 of the acyl chain. The polypeptide is Stearoyl-[acyl-carrier-protein] 9-desaturase, chloroplastic (Ricinus communis (Castor bean)).